Here is a 1929-residue protein sequence, read N- to C-terminus: MASAIALSSSTAQNKITLKSVASRLQQTDDPDIRVWSQSVGFHLQFSNWKCANAFCRFVTDAYNLTPYKECARSITRQLTSLSNYLSAQTGVSVSGTQFLLSPSDVEVPVAKTGESVSDIMVPSYSVNGTSMEFDSMAQLAQALTTGFTFSVNDAQIGNAPAQTGESVSGTGFIAEACPSCALYDKCPNCTSELINDDGSSQSPGDIPHWTHHKIASGIVNILSSDMSSMEDDDFANIAAHVKKALGTNSHPANNDMSKDQLNWLLNIAEASLIRKADRTALPMNAARIAARRGWREKLFNEPADKLYTLLRKSKDSFQKSAIWGILFEKASNAKHYTEIVFQDIVKLIKEECNPSNNFYFKVMAQSFLDHFRMLVIDNPDPVANLPKFILKLKPLNLKMIIENHENTAEGWIVTLTAVAELYGWLEFAVDLVPKIVSELYDLLTSATQKCFSMVRELLTNLNILKAESFDFTNPFWYALAALLSYFVTGFLPNNAKCSAIKQTLNGATTLVAGITAIQKLAAMFSAWSNESVVDDLSTKVIGLTEADNPTVTQDIDAVTNLQIMAEQLKDQIKLKTLDPTFQPYLPVLRNLMSTTDSVISHCAKRKALATQRTAPVCIILTGPAGCGKTTLAYAIANRLSAQKPSVLNLNIDHHDAYTGNEVCIIDEFDSNPDSKFVEFVVEMVNTNPMLLNCDLIENKGKTFSSKYVIMTSNNETPVKPNSTRAPPFYRRVRIIDVTNPGVMSFKYENPGQEVPSYLFSNDFNHLSMSMRGFGAFSKTRVIDPEGRKTCGLEGPPGQRVDVDDIVRYMQRMYRENQMNFKSEAGNNRLKTPRFAFVTQRKHVDTVYKILAAAKTTYNGYYSLTKDSFDVNEGHNIGSSVFVVGDDKEIPHNCKIFRCNHLAMFRHPELAHIEGDNFRAALGVTMSDQDVTLMFYHIRGKHIQDEVRLDELPANHHIVTVHSVYDMAWALNRHLSLTGKWQALKAVYDLYMTPDILPAALRHWMDNTKFSSDHVVTQFIVPGGTIILETCNGARMWATSRRLIRAGGISNNNGPEGGFRFGSIAPRDIPWSEILREFLNLISLIWSRVKGATIVLTALLLYMKRYKPRSEAKGKTKGGRGAIRHGGKGIVLSDDEYDEWREFNMEKRMDMSVDEFLMLKHRAALGSDDTGAIQFRSWWTARQMRESTGLDHDDVTVIGKGGVRHEVHRTEIMKAPKQKKKSFAWGEDMYAEGDGKIVNHVNAIVPVTGLCGEHIGYAVHIGHGKCISLKHVLKTGSYVFNQKPIDVTFDGELAHFQIQQPPSSAAPVTFSSKPTRDPWGRSVSTEWKHDTYNTTAGKMYGSICWTATRTQPGDCGLPYVDRAGQVVGLHAGSGGDSAPGRKIVIPVTKFKLPSNTVLSNRFWKEEAPTISYKGLTVQETGVNKAVLKGTNYHVSPAHVDDYQDCTHQPANLGAQDERYPVSLTSIVINNLEPYKQPTQGPPTEVLNKAYNMLVQHYEPLIPKATTHLEMGDAFAALNVKTSCGPYITGRKKDHIDPETGKWDETLRNHINARWSLATQGVPIPHEYQLGLKDELRPKDKIAVGKRRLIWGCDVGVAVVAASAFKEVSSAIMAMSEFDFIQVGINMDGTAVETLYKRLYTPGTHRYCVDYSKWDSTQPPNVTRMSLELLRHFTDKSPVVDSAVATLSSPSIAVFGGVSFKTNGGLPSGMPLTSILNSLNHCLLVGSAIIQVLESKGVDVNWNIYDTIDLFTYGDDGVYIVPNFVHSVMPEVFSCLSSYGLKPTRTDKSSAPITEIPLSEPIEFLKRQFVRNQFGVRALLDRSSLIRQFYYIKGKNTMEWTKPPEQIDLTSRTAQLQVVMLYASQHGREFYKKCLDYYQLAMEYEGIKLDAPTYDEALAKYNANFNGVEDCDLLPAGYDEHRLDKIVFEN.

The region spanning 597–753 is the SF3 helicase domain; that stretch reads DSVISHCAKR…MSFKYENPGQ (157 aa). An ATP-binding site is contributed by 623 to 630; it reads GPAGCGKT. Tyrosine 1137 is subject to O-(5'-phospho-RNA)-tyrosine. One can recognise a Peptidase C24 domain in the interval 1235-1391; sequence GKIVNHVNAI…KIVIPVTKFK (157 aa). Catalysis depends on for 3CLpro activity residues histidine 1271, glutamate 1292, and cysteine 1355. Positions 1643–1768 constitute a RdRp catalytic domain; the sequence is THRYCVDYSK…IVPNFVHSVM (126 aa).

Homodimer. Interacts with NTPase, protein p30 and protease-polymerase p76. In terms of assembly, interacts with capsid protein VP1 and protease-polymerase p76. Interacts with host IEF4e; this interaction plays a role in translation of viral proteins. As to quaternary structure, homooligomer. Interacts with Vpg, protein p32 and may interact with capsid protein VP1. Post-translationally, specific enzymatic cleavages in vivo yield mature proteins. Pro-Pol is first autocatalytically cleaved, then processes the whole polyprotein. In terms of processing, VPg is uridylylated by the polymerase and is covalently attached to the 5'-end of the polyadenylated genomic and subgenomic RNAs. This uridylylated form acts as a nucleotide-peptide primer for the polymerase.

It is found in the host endoplasmic reticulum membrane. The enzyme catalyses a ribonucleoside 5'-triphosphate + H2O = a ribonucleoside 5'-diphosphate + phosphate + H(+). It catalyses the reaction RNA(n) + a ribonucleoside 5'-triphosphate = RNA(n+1) + diphosphate. It carries out the reaction Endopeptidase with a preference for cleavage when the P1 position is occupied by Glu-|-Xaa and the P1' position is occupied by Gly-|-Yaa.. In terms of biological role, together with NTPase and NS4, initiates the formation of the replication complex. Induces the proliferation of the host smooth ER membranes forming long tubular structures. These remodeled membranes probably form the viral factories that contain the replication complex. Displays NTPase activity, but no helicase activity. Induces the formation of convoluted membranes derived from the host ER. These remodeled membranes probably form the viral factories that contain the replication complex. Together with NS2 and NS4, initiates the formation of the replication complex. Its function is as follows. Probable key protein responsible for the formation of membrane alterations by the virus. Induces the formation of convoluted membranes derived from the host ER. These remodeled membranes probably form the viral factories that contain the replication complex. Together with NS2 and NTPase, initiates the formation of the replication complex. Functionally, viral genome-linked protein is covalently linked to the 5'-end of the positive-strand, negative-strand genomic RNAs and subgenomic RNA. Acts as a genome-linked replication primer. May recruit ribosome to viral RNA thereby promoting viral proteins translation. Interacts with host translation initiation complex to allow the translation of viral proteins. In terms of biological role, protease-polymerase p76 processes the polyprotein: Pro-Pol is first released by autocleavage, then all other proteins are cleaved. Cleaves host translation initiation factor eIF4G1, eIF4G2 and PABP1 thereby inducing a shutdown of host protein synthesis. This shutdown may not prevent viral mRNA from being translated since viral Vpg replaces the cap. Also functions as an RNA-directed RNA polymerase, which replicates genomic and antigenomic viral RNA by recognizing specific signals. Also transcribes a subgenomic mRNA by initiating RNA synthesis internally on antigenomic RNA. This sgRNA codes for structural proteins. Catalyzes the covalent attachment VPg with viral RNAs. This is Genome polyprotein from Canine calicivirus (strain 48) (CaCV).